The chain runs to 414 residues: Gamma-glutamyl phosphate reductase (414 aa).

The protein belongs to the gamma-glutamyl phosphate reductase family.

The protein resides in the cytoplasm. It catalyses the reaction L-glutamate 5-semialdehyde + phosphate + NADP(+) = L-glutamyl 5-phosphate + NADPH + H(+). Its pathway is amino-acid biosynthesis; L-proline biosynthesis; L-glutamate 5-semialdehyde from L-glutamate: step 2/2. Its function is as follows. Catalyzes the NADPH-dependent reduction of L-glutamate 5-phosphate into L-glutamate 5-semialdehyde and phosphate. The product spontaneously undergoes cyclization to form 1-pyrroline-5-carboxylate. This chain is Gamma-glutamyl phosphate reductase, found in Thermoanaerobacter pseudethanolicus (strain ATCC 33223 / 39E) (Clostridium thermohydrosulfuricum).